The chain runs to 56 residues: Ovomucoid (56 aa).

Positions 6–56 (VDCSEYPKPDCTLEYRPLCGSDNKTYANKCNFCNAVVESNGTLTLSHFGKC) constitute a Kazal-like domain. 3 cysteine pairs are disulfide-bonded: C8/C38, C16/C35, and C24/C56. N45 carries N-linked (GlcNAc...) asparagine glycosylation.

It localises to the secreted. The polypeptide is Ovomucoid (Callipepla squamata castanogastris (Chestnut bellied scaled quail)).